A 397-amino-acid chain; its full sequence is Elongation factor Tu (397 aa).

The region spanning 10-206 (KPHVNIGTIG…AVDEYIPTPE (197 aa)) is the tr-type G domain. Residues 19–26 (GHVDHGKT) are G1. 19–26 (GHVDHGKT) provides a ligand contact to GTP. Thr-26 contributes to the Mg(2+) binding site. The tract at residues 60–64 (GITIS) is G2. Residues 81–84 (DCPG) form a G3 region. Residues 81–85 (DCPGH) and 136–139 (NKAD) each bind GTP. The segment at 136–139 (NKAD) is G4. The segment at 174–176 (SAL) is G5.

It belongs to the TRAFAC class translation factor GTPase superfamily. Classic translation factor GTPase family. EF-Tu/EF-1A subfamily. As to quaternary structure, monomer.

It is found in the cytoplasm. It carries out the reaction GTP + H2O = GDP + phosphate + H(+). Its function is as follows. GTP hydrolase that promotes the GTP-dependent binding of aminoacyl-tRNA to the A-site of ribosomes during protein biosynthesis. This is Elongation factor Tu from Clostridium tetani (strain Massachusetts / E88).